A 314-amino-acid chain; its full sequence is Fibrinogen-like protein 1 (314 aa).

The N-terminal stretch at 1-22 (MGEIRSFVLITVALILGKESWV) is a signal peptide. The stretch at 28-62 (CLQEQVRLRAQVRQLETRVKQQQVVIAQLLHEKEV) forms a coiled coil. A Fibrinogen C-terminal domain is found at 76–308 (LGGKRHYADC…SVVMKIRPSD (233 aa)). Disulfide bonds link Cys85-Cys114 and Cys250-Cys263.

Homodimer. Interacts (via the Fibrinogen C-terminal domain) with LAG3 (via Ig-like domains 1 and 2).

It localises to the secreted. In terms of biological role, immune suppressive molecule that inhibits antigen-specific T-cell activation by acting as a major ligand of LAG3. Responsible for LAG3 T-cell inhibitory function. Binds LAG3 independently from MHC class II (MHC-II). Secreted by, and promotes growth of, hepatocytes. The sequence is that of Fibrinogen-like protein 1 from Rattus norvegicus (Rat).